The following is a 218-amino-acid chain: Small ribosomal subunit protein uS3c (218 aa).

The KH type-2 domain occupies 47-118 (IRRHMRSSSN…KLNIAIVKVA (72 aa)).

The protein belongs to the universal ribosomal protein uS3 family. Part of the 30S ribosomal subunit.

It localises to the plastid. The protein resides in the chloroplast. This is Small ribosomal subunit protein uS3c (rps3) from Cycas taitungensis (Prince sago).